Reading from the N-terminus, the 1759-residue chain is Collagen alpha-1(IV) chain (1759 aa).

A signal peptide spans 1–20 (MSRLSLLGLTAAVVLLSSFC). A propeptide spans 21–194 (QDRIHVDAAA…PGNSGYPGLK (174 aa)) (N-terminal propeptide (7S domain)). Disordered stretches follow at residues 51–245 (PGFG…GSYP), 269–415 (KGRD…GIDG), 548–596 (AGDP…PGLP), 618–650 (PAGI…GGPG), 666–720 (IDGK…RGIP), and 787–1522 (RGQQ…GTPG). Low complexity-rich tracts occupy residues 104–116 (HPGL…LPGL), 140–153 (PPGQ…PGRP), and 278–293 (PGML…PGLK). The segment at 195 to 1530 (GAKGDPGPYG…PGYPGSPGGW (1336 aa)) is triple-helical region. 3 stretches are compositionally biased toward gly residues: residues 324–345 (GEQG…GEPG), 360–370 (GPLGEGTGEAG), and 379–388 (GVQGGKGLPG). 2 stretches are compositionally biased toward low complexity: residues 399 to 411 (RGPV…PGQP) and 574 to 595 (MPGA…SPGL). Low complexity predominate over residues 833–848 (YPGPNGDAGAAGLPGP). Positions 904–913 (GQDGGPGYSG) are enriched in gly residues. Low complexity-rich tracts occupy residues 1037–1047 (YPGQPGDVGYP), 1219–1232 (ENGD…DGQP), 1247–1271 (PGRD…PGQD), and 1281–1309 (QDGY…YGMP). The span at 1310-1319 (GLPGGPGESG) shows a compositional bias: gly residues. Low complexity predominate over residues 1341-1357 (LPGAPGVPGVEGVPGLE). A compositionally biased stretch (basic and acidic residues) spans 1410–1422 (PRGDDGFPGRDGL). Composition is skewed to low complexity over residues 1423–1437 (DGLP…LPGP) and 1472–1482 (PPGKAGYPGAP). A compositionally biased stretch (gly residues) spans 1495 to 1504 (GMPGHGGDQG). Residues 1535–1759 (GFTFAKHSQT…SRCQVCLKNR (225 aa)) enclose the Collagen IV NC1 domain. Cystine bridges form between cysteine 1550–cysteine 1641, cysteine 1583–cysteine 1638, cysteine 1595–cysteine 1601, cysteine 1660–cysteine 1755, cysteine 1694–cysteine 1752, and cysteine 1706–cysteine 1712. An S-Lysyl-methionine sulfilimine (Met-Lys) (interchain with K-1741) cross-link involves residue methionine 1623. Residue lysine 1741 forms an S-Lysyl-methionine sulfilimine (Lys-Met) (interchain with M-1623) linkage.

This sequence belongs to the type IV collagen family. Trimers of two alpha 1(IV) and one alpha 2(IV) chain. Type IV collagen forms a mesh-like network linked through intermolecular interactions between 7S domains and between NC1 domains. In terms of processing, prolines at the third position of the tripeptide repeating unit (G-X-Y) are hydroxylated in some or all of the chains. Type IV collagens contain numerous cysteine residues which are involved in inter- and intramolecular disulfide bonding. 12 of these, located in the NC1 domain, are conserved in all known type IV collagens. Post-translationally, the trimeric structure of the NC1 domains is stabilized by covalent bonds between Lys and Met residues.

It localises to the secreted. The protein resides in the extracellular space. Its subcellular location is the extracellular matrix. It is found in the basement membrane. Its function is as follows. Collagen type IV is specific for basement membranes. Required to restrict presynaptic growth at the neuromuscular junctions (NMJ) in late larval stage and in adult motor neurons. May play a role in axon regeneration in embryos following injury in D-type motor neurons. The protein is Collagen alpha-1(IV) chain of Caenorhabditis elegans.